A 355-amino-acid chain; its full sequence is Serine endoprotease DegS (355 aa).

Residues 1–4 are Cytoplasmic-facing; that stretch reads MFVK. The helical transmembrane segment at 5 to 27 threads the bilayer; the sequence is LLRSVAIGLIVGAILLVAMPSLR. Over 28–355 the chain is Periplasmic; it reads SLNPLSTPQF…VTIQEYPATN (328 aa). Catalysis depends on charge relay system residues histidine 96 and aspartate 126. Residue threonine 184 coordinates substrate. The Charge relay system role is filled by serine 201. 259–264 is a substrate binding site; it reads IGIGGR. The 46-residue stretch at 281–326 folds into the PDZ domain; it reads GIVVNEVSPDGPAANAGIQVNDLIISVDNKPAISALETMDQVAEIR. Tyrosine 351 lines the substrate pocket.

This sequence belongs to the peptidase S1C family. As to quaternary structure, homotrimer.

It is found in the cell inner membrane. The catalysed reaction is Acts on substrates that are at least partially unfolded. The cleavage site P1 residue is normally between a pair of hydrophobic residues, such as Val-|-Val.. With respect to regulation, allosterically activated by the C-terminus of exposed OMP peptides (consensus Tyr-X-Phe-COOH); cleavage only occurs in the presence of peptides. Inhibited when RseB is bound to RseA. Its function is as follows. A site-1 protease (S1P) that cleaves the peptide bond between 'Val-148' and 'Ser-149' in RseA. Part of a regulated intramembrane proteolysis (RIP) cascade. When heat shock or other environmental stresses disrupt protein folding in the periplasm, DegS senses the accumulation of unassembled outer membrane porins (OMP) and then initiates RseA (anti sigma-E factor) degradation by cleaving its periplasmic domain, making it a substrate for subsequent cleavage by RseP. This cascade ultimately leads to the sigma-E-driven expression of a variety of factors dealing with folding stress in the periplasm and OMP assembly. Required for basal and stress-induced degradation of RseA. The protein is Serine endoprotease DegS (degS) of Escherichia coli O157:H7.